Here is a 663-residue protein sequence, read N- to C-terminus: Cyclic nucleotide-gated channel alpha-2 (663 aa).

The tract at residues 1–61 (MTEKANGVKS…QLAEMDAPQQ (61 aa)) is disordered. At 1–144 (MTEKANGVKS…PAGDWYYRWL (144 aa)) the chain is on the cytoplasmic side. Residues 12–23 (PANNHNHHAPPA) show a composition bias toward low complexity. Residues 145 to 166 (FLIALPVLYNWCLLVARACFSD) traverse the membrane as a helical segment. Residues 167-176 (LQKGYYIVWL) lie on the Extracellular side of the membrane. The helical transmembrane segment at 177 to 197 (VLDYVSDVVYIADLFIRLRTG) threads the bilayer. Residues 198–222 (FLEQGLLVKDTKKLRDNYIHTMQFK) lie on the Cytoplasmic side of the membrane. The chain crosses the membrane as a helical span at residues 223 to 241 (LDVASIIPTDLIYFAVGIH). At 242 to 246 (NPEVR) the chain is on the extracellular side. Residues 247-265 (FNRLLHFARMFEFFDRTET) traverse the membrane as a helical segment. Over 266-272 (RTSYPNI) the chain is Cytoplasmic. Residues 270–378 (PNIFRISNLI…GNVGSMISNM (109 aa)) are ion conduction pathway. A helical transmembrane segment spans residues 273-296 (FRISNLILYILIIIHWNACIYYAI). Residues 297 to 319 (SKSIGFGVDTWVYPNITDPEYGY) are Extracellular-facing. The next 2 membrane-spanning stretches (helical) occupy residues 320-354 (LSRE…LFVI) and 355-379 (FDFL…SNMN). The tract at residues 337–340 (TIGE) is selectivity filter. The tract at residues 380 to 456 (ATRAEFQAKI…STLKKVRIFQ (77 aa)) is C-linker. The Cytoplasmic segment spans residues 380–663 (ATRAEFQAKI…NSPEPPAEKP (284 aa)). Positions 460–580 (AGLLVELVLK…EERGREILMK (121 aa)) are cyclic nucleotide-binding domain. 4 residues coordinate 3',5'-cyclic GMP: glycine 520, serine 523, arginine 536, and threonine 537. Positions 536 and 537 each coordinate 3',5'-cyclic AMP. Residues 597–651 (VQEKLEQLETNMDTLYTRFARLLAEYTGAQQKLKQRITVLETKMKQNNEDDSLSD) are a coiled coil. Residues 640–663 (MKQNNEDDSLSDGMNSPEPPAEKP) are disordered.

It belongs to the cyclic nucleotide-gated cation channel (TC 1.A.1.5) family. CNGA2 subfamily. The olfactory cyclic nucleotide-gated channel is an heterotetramer composed of CNGA2, CNGA4 and CNGB1b subunits with 2:1:1 stoichiometry. In terms of tissue distribution, olfactory neurons.

Its subcellular location is the cell projection. The protein localises to the cilium membrane. It catalyses the reaction Ca(2+)(in) = Ca(2+)(out). The catalysed reaction is Na(+)(in) = Na(+)(out). The enzyme catalyses K(+)(in) = K(+)(out). It carries out the reaction NH4(+)(in) = NH4(+)(out). It catalyses the reaction Rb(+)(in) = Rb(+)(out). The catalysed reaction is Li(+)(in) = Li(+)(out). The enzyme catalyses Cs(+)(in) = Cs(+)(out). Its function is as follows. Pore-forming subunit of the olfactory cyclic nucleotide-gated channel. Operates in the cilia of olfactory sensory neurons where chemical stimulation of the odorant is converted to an electrical signal. Mediates odorant-induced cAMP-dependent Ca(2+) influx triggering neuron depolarization. The rise of intracellular Ca(2+) levels potentiates the olfactory response by activating Ca(2+)-dependent Cl(-) channels, but it also serves as a negative feedback signal to desensitize the channel for rapid adaptation to odorants. Conducts cAMP- and cGMP-gated ion currents, with permeability for monovalent and divalent cations. In Bos taurus (Bovine), this protein is Cyclic nucleotide-gated channel alpha-2.